The sequence spans 294 residues: UDP-3-O-acyl-N-acetylglucosamine deacetylase (294 aa).

Residues His-75, His-232, and Asp-236 each contribute to the Zn(2+) site. Residue His-259 is the Proton donor of the active site.

This sequence belongs to the LpxC family. Requires Zn(2+) as cofactor.

The enzyme catalyses a UDP-3-O-[(3R)-3-hydroxyacyl]-N-acetyl-alpha-D-glucosamine + H2O = a UDP-3-O-[(3R)-3-hydroxyacyl]-alpha-D-glucosamine + acetate. The protein operates within glycolipid biosynthesis; lipid IV(A) biosynthesis; lipid IV(A) from (3R)-3-hydroxytetradecanoyl-[acyl-carrier-protein] and UDP-N-acetyl-alpha-D-glucosamine: step 2/6. Catalyzes the hydrolysis of UDP-3-O-myristoyl-N-acetylglucosamine to form UDP-3-O-myristoylglucosamine and acetate, the committed step in lipid A biosynthesis. The polypeptide is UDP-3-O-acyl-N-acetylglucosamine deacetylase (Campylobacter jejuni (strain RM1221)).